Here is a 936-residue protein sequence, read N- to C-terminus: General transcription factor II-I repeat domain-containing protein 2 (936 aa).

The GTF2I-like 1 repeat unit spans residues 95–189; it reads EACPGEAQLL…FLGAESQLGG (95 aa). The tract at residues 199 to 222 is disordered; the sequence is PTVPPNDSYGPVSVKTEPMEDSGT. A GTF2I-like 2 repeat occupies 319–413; sequence LSGLEKIKQL…LPGLELSNVG (95 aa).

It belongs to the TFII-I family. As to expression, ubiquitous.

The protein resides in the nucleus. In Mus musculus (Mouse), this protein is General transcription factor II-I repeat domain-containing protein 2 (Gtf2ird2).